We begin with the raw amino-acid sequence, 255 residues long: uncharacterized protein (255 aa).

The tract at residues 42 to 67 is disordered; the sequence is ACSGSPPEPGKGRPDTTPEQEVPVTA.

This is an uncharacterized protein from Mycobacterium tuberculosis (strain CDC 1551 / Oshkosh).